The chain runs to 109 residues: uncharacterized protein (109 aa).

3 consecutive transmembrane segments (helical) span residues 7–27 (IITI…PFFV), 37–57 (YIRY…VVYC), and 63–83 (ILTG…LGLH).

It belongs to the AzlD/HI_1737/HP1330 family.

The protein localises to the cell membrane. This is an uncharacterized protein from Haemophilus influenzae (strain ATCC 51907 / DSM 11121 / KW20 / Rd).